A 450-amino-acid polypeptide reads, in one-letter code: Tubulin alpha-5 chain (450 aa).

Residues Gln11, Glu71, Gly144, Thr145, Thr179, Asn206, and Asn228 each contribute to the GTP site. Glu71 provides a ligand contact to Mg(2+). Glu254 is a catalytic residue. Thr349 carries the phosphothreonine modification. The tract at residues Glu429–Tyr450 is disordered. A compositionally biased stretch (acidic residues) spans Asp431 to Tyr450.

It belongs to the tubulin family. As to quaternary structure, dimer of alpha and beta chains. A typical microtubule is a hollow water-filled tube with an outer diameter of 25 nm and an inner diameter of 15 nM. Alpha-beta heterodimers associate head-to-tail to form protofilaments running lengthwise along the microtubule wall with the beta-tubulin subunit facing the microtubule plus end conferring a structural polarity. Microtubules usually have 13 protofilaments but different protofilament numbers can be found in some organisms and specialized cells. Mg(2+) is required as a cofactor. In terms of processing, undergoes a tyrosination/detyrosination cycle, the cyclic removal and re-addition of a C-terminal tyrosine residue by the enzymes tubulin tyrosine carboxypeptidase (TTCP) and tubulin tyrosine ligase (TTL), respectively.

The protein localises to the cytoplasm. It is found in the cytoskeleton. It catalyses the reaction GTP + H2O = GDP + phosphate + H(+). Tubulin is the major constituent of microtubules, a cylinder consisting of laterally associated linear protofilaments composed of alpha- and beta-tubulin heterodimers. Microtubules grow by the addition of GTP-tubulin dimers to the microtubule end, where a stabilizing cap forms. Below the cap, tubulin dimers are in GDP-bound state, owing to GTPase activity of alpha-tubulin. The sequence is that of Tubulin alpha-5 chain (TUBA5) from Arabidopsis thaliana (Mouse-ear cress).